The primary structure comprises 569 residues: MSEENNHKEKSKNEIKKEKKKIEKEKKITELKSKKKINEKNNTINYDDDDDNDDDNFKNKKWGEINNENYKEIIKNRFVKEWSNISDLNESCVGKYVLIRARVSNIRSFGNSLCFLQLRDGLSSIQAVISKNDENNSKSMIHFINSTITKESIIDIEAILTNSSTPIESCIIKNLELKIYSLFLQSKSNSSLPLQFDDLSKPTTYQNYDDNGYTYVIPLNSRLNNRCLDLRTFYNLSIFKIQSAISNLFRDQLLINDFIEIHSPKIIKQSINENSFKLNYFNEIAYLSESTQFYRQLAIVSDFKRVFEIGPVYRTDLGHTHRHLNEFTSLDFEMTFKDHYHEVLDFLDNLMISIFKILETNYENELKIINNYQLQFEKFKFSTKTPRFTFSEVKLMLIEFSENENNKFCMELFDYLNVQEERIFGKIVKEKFNVDYYIIEKPSSEYQPFYIMPDSNNEKLLNSFHIYINGEKIGSGSQRIHDWKLLEKRYKNYYINHNNNNNNNNNNNNNNNNNNNNNNIENYINIFKFGCSQHAGCSIGLERLVMAYLGLENIRKASFCPRDPTRLTP.

Residues Met-1–Glu-23 form a disordered region. Residues Gln-292–Arg-295 form an aspartate region. Position 314 (Arg-314) interacts with L-aspartate. ATP is bound by residues Arg-314–Asp-316 and Arg-322–Leu-324. L-aspartate-binding residues include Ser-475 and Arg-479. Residue Gly-540–Arg-543 coordinates ATP.

It belongs to the class-II aminoacyl-tRNA synthetase family. Type 2 subfamily.

It is found in the cytoplasm. It catalyses the reaction tRNA(Asp) + L-aspartate + ATP = L-aspartyl-tRNA(Asp) + AMP + diphosphate. This is Aspartate--tRNA ligase, cytoplasmic 2 (aspS2) from Dictyostelium discoideum (Social amoeba).